The following is a 149-amino-acid chain: Probable flagellum biosynthesis repressor protein FlbT (149 aa).

It belongs to the FlbT family.

In terms of biological role, has a post-transcriptional repressor function in flagellum biogenesis. Associates with the 5'-UTR of fljK mRNA and promotes its degradation. In Sinorhizobium medicae (strain WSM419) (Ensifer medicae), this protein is Probable flagellum biosynthesis repressor protein FlbT.